A 406-amino-acid polypeptide reads, in one-letter code: MAKKEVKKIVLAYSGGLDTSIILKWLKNEYGCEVITFSADLGQGDELTPIRDKAFATGADKVYIDDLREEFVRDFVFPMFRANAIYEGHYLLGTSIARPLIAKRQMEIAKIEGADAVSHGATGKGNDQVRFELGYYHFNPAITVIAPWRDWKLNSRQALINYAKKNDIPIPVTKKRPWSSDRNLLHISFEGAILEDTWAEAPENMYVLTKSPEKAPNKPQYVEIEFRNGNAVAVDGEAMSPAQLLAHLNFIGGEHGIGRVDLLENRSVGMKSRGVYETPGGTILREAHMAVEQITMDREVMHLRDSLIPRYAEMVYNGYWFSPEREMLQTMIDESQKTVNGVARVKLYKGHCRTVGRKSETDSLFNLDFATFEKDQVYNQKDAEGFIKLNSLRLRIRSLMQAAKKK.

Residues 12–20 (AYSGGLDTS) and Ala39 contribute to the ATP site. L-citrulline-binding residues include Tyr90 and Ser95. Position 120 (Gly120) interacts with ATP. The L-aspartate site is built by Thr122, Asn126, and Asp127. Asn126 lines the L-citrulline pocket. Arg130, Ser179, Ser188, Glu264, and Tyr276 together coordinate L-citrulline.

The protein belongs to the argininosuccinate synthase family. Type 1 subfamily. In terms of assembly, homotetramer.

It localises to the cytoplasm. The catalysed reaction is L-citrulline + L-aspartate + ATP = 2-(N(omega)-L-arginino)succinate + AMP + diphosphate + H(+). The protein operates within amino-acid biosynthesis; L-arginine biosynthesis; L-arginine from L-ornithine and carbamoyl phosphate: step 2/3. This Geotalea uraniireducens (strain Rf4) (Geobacter uraniireducens) protein is Argininosuccinate synthase.